We begin with the raw amino-acid sequence, 251 residues long: NADPH-dependent oxidoreductase (251 aa).

Belongs to the flavin oxidoreductase frp family. FMN serves as cofactor.

Its function is as follows. Reduces FMN, organic nitro compounds and disulfide DTNB. Involved in maintenance of the cellular redox state and the disulfide stress response. This is NADPH-dependent oxidoreductase (nfrA) from Staphylococcus aureus (strain MRSA252).